Consider the following 175-residue polypeptide: Peptide deformylase (175 aa).

Fe cation is bound by residues cysteine 96 and histidine 138. Glutamate 139 is an active-site residue. Residue histidine 142 coordinates Fe cation.

This sequence belongs to the polypeptide deformylase family. The cofactor is Fe(2+).

The enzyme catalyses N-terminal N-formyl-L-methionyl-[peptide] + H2O = N-terminal L-methionyl-[peptide] + formate. Functionally, removes the formyl group from the N-terminal Met of newly synthesized proteins. Requires at least a dipeptide for an efficient rate of reaction. N-terminal L-methionine is a prerequisite for activity but the enzyme has broad specificity at other positions. The chain is Peptide deformylase from Helicobacter pylori (strain Shi470).